The primary structure comprises 178 residues: Epididymal-specific lipocalin-9 (178 aa).

The signal sequence occupies residues 1–16; that stretch reads MVLLLVLGLVLSLATA. N-linked (GlcNAc...) asparagine glycosylation is found at Asn46, Asn68, and Asn129. A disulfide bridge connects residues Cys83 and Cys176.

Belongs to the calycin superfamily. Lipocalin family. In terms of tissue distribution, expressed in epididymis. Not detected in all other tissues tested.

Its subcellular location is the secreted. This Mus musculus (Mouse) protein is Epididymal-specific lipocalin-9 (Lcn9).